The following is an 822-amino-acid chain: Coiled-coil domain-containing protein 175 (822 aa).

Coiled coils occupy residues 129–164, 223–397, and 510–537; these read IIEI…EVLG, IEKQ…KQMM, and HLIE…IEEL.

This is Coiled-coil domain-containing protein 175 (Ccdc175) from Mus musculus (Mouse).